A 649-amino-acid chain; its full sequence is DNA mismatch repair protein MutL (649 aa).

Belongs to the DNA mismatch repair MutL/HexB family.

This protein is involved in the repair of mismatches in DNA. It is required for dam-dependent methyl-directed DNA mismatch repair. May act as a 'molecular matchmaker', a protein that promotes the formation of a stable complex between two or more DNA-binding proteins in an ATP-dependent manner without itself being part of a final effector complex. The protein is DNA mismatch repair protein MutL of Streptococcus pneumoniae serotype 2 (strain D39 / NCTC 7466).